Reading from the N-terminus, the 227-residue chain is Ribosomal RNA small subunit methyltransferase G (227 aa).

Residues Gly-81, Leu-86, Ala-131–Glu-132, and Arg-149 each bind S-adenosyl-L-methionine.

It belongs to the methyltransferase superfamily. RNA methyltransferase RsmG family.

It is found in the cytoplasm. Specifically methylates the N7 position of guanine in position 518 of 16S rRNA. This Rhodococcus jostii (strain RHA1) protein is Ribosomal RNA small subunit methyltransferase G.